Here is a 156-residue protein sequence, read N- to C-terminus: Protein GLUTAMINE DUMPER 4 (156 aa).

At 1–39 the chain is on the extracellular side; the sequence is MRPLSIKPTSLDVARHATSVESFGNHRPPISPWHSPVPY. The helical transmembrane segment at 40–60 threads the bilayer; that stretch reads LFGGLAAMLGLIAFALLILAC. The Cytoplasmic portion of the chain corresponds to 61–156; that stretch reads SYWRLSTSGD…AKENEETTSQ (96 aa). Residues 67–87 form a disordered region; the sequence is TSGDDSGERVDEEKESRSGVK. Residues 72–84 are compositionally biased toward basic and acidic residues; sequence SGERVDEEKESRS. The VIMAG motif lies at 99-103; sequence VIMAG. The disordered stretch occupies residues 136–156; that stretch reads AGEEKMGDREKAKENEETTSQ.

Belongs to the GLUTAMINE DUMPER 1 (TC 9.B.60) family. In terms of tissue distribution, expressed in the vascular tissues, even in the minor veins of the leaves.

It localises to the membrane. Its function is as follows. Probable subunit of an amino acid transporter involved in the regulation of the amino acid metabolism. Stimulates amino acid export by activating nonselective amino acid facilitators. The sequence is that of Protein GLUTAMINE DUMPER 4 (GDU4) from Arabidopsis thaliana (Mouse-ear cress).